We begin with the raw amino-acid sequence, 125 residues long: Large ribosomal subunit protein bL17 (125 aa).

Belongs to the bacterial ribosomal protein bL17 family. In terms of assembly, part of the 50S ribosomal subunit. Contacts protein L32.

This Marinomonas sp. (strain MWYL1) protein is Large ribosomal subunit protein bL17.